The sequence spans 621 residues: Membrane protein insertase YidC (621 aa).

6 helical membrane-spanning segments follow: residues 1–21 (MDKNTLVGFALIGAVVIGFSI), 363–383 (GWGLSMGVVLLLMTIIVKVLV), 436–456 (MGGCLPMLIQMPVFMALFFFV), 486–506 (IPLLGNHLSLFCLLFSITNIL), 527–547 (LMMYIMPVMFIFIFNGYSSGL), and 549–569 (YYYFISGLIGILTMVILRKTT).

This sequence belongs to the OXA1/ALB3/YidC family. Type 1 subfamily. Interacts with the Sec translocase complex via SecD. Specifically interacts with transmembrane segments of nascent integral membrane proteins during membrane integration.

The protein localises to the cell inner membrane. Functionally, required for the insertion and/or proper folding and/or complex formation of integral membrane proteins into the membrane. Involved in integration of membrane proteins that insert both dependently and independently of the Sec translocase complex, as well as at least some lipoproteins. Aids folding of multispanning membrane proteins. The protein is Membrane protein insertase YidC of Phocaeicola vulgatus (strain ATCC 8482 / DSM 1447 / JCM 5826 / CCUG 4940 / NBRC 14291 / NCTC 11154) (Bacteroides vulgatus).